Consider the following 284-residue polypeptide: Trimeric intracellular cation channel type B-A (284 aa).

Topologically, residues 1 to 15 (MESLSELSVQFSQLS) are lumenal. The chain crosses the membrane as a helical span at residues 16 to 33 (MFPFFDMAHYVVSVMSAR). Residues 34 to 46 (EQAGALDIAARSP) are Cytoplasmic-facing. The helical transmembrane segment at 47–68 (MASWFSAMLYCFGGGILSSILL) threads the bilayer. The Lumenal portion of the chain corresponds to 69-79 (AEPPIAVLSNT). The helical transmembrane segment at 80–99 (TNIMLASTIWYMVYYFPYDL) threads the bilayer. Residues 100–102 (FYN) are Cytoplasmic-facing. Residues 103-121 (CFFFLPIRLIIAGMKEVTR) form a helical membrane-spanning segment. Lys117 and Arg121 together coordinate a 1,2-diacyl-sn-glycero-3-phospho-(1D-myo-inositol-4,5-bisphosphate). Over 122–137 (TWKILSGVTHAHSHYK) the chain is Lumenal. Residues 138–155 (DALLVMITIGWARGAGGG) form a helical membrane-spanning segment. The Cytoplasmic segment spans residues 156-177 (LISNFEQLVRGVWKPESNEFLK). The chain crosses the membrane as a helical span at residues 178 to 195 (MSYPVKVTLIGAVLFTLQ). The Lumenal portion of the chain corresponds to 196–206 (HGHYLPISRHN). The chain crosses the membrane as a helical span at residues 207–224 (LMLIYTMFLVLIKVTMML). The Cytoplasmic segment spans residues 225–284 (THSTASPFLPLETPLQRILFGQRQKPSEVRQSASSSGAKGKPSKKTLDKDSGEQSKKKDS). Residues 246–284 (QRQKPSEVRQSASSSGAKGKPSKKTLDKDSGEQSKKKDS) are disordered. Positions 269–284 (KTLDKDSGEQSKKKDS) are enriched in basic and acidic residues.

It belongs to the TMEM38 family. As to quaternary structure, homotrimer; conformation seems to be controled by binding to diacylglycerol (DAG).

It is found in the endoplasmic reticulum membrane. It catalyses the reaction K(+)(in) = K(+)(out). Its activity is regulated as follows. Channel activity is activated by increased cytosolic Ca(2+) levels and blocked by luminal high Ca(2+) levels. Functionally, intracellular monovalent cation channel required for maintenance of rapid intracellular calcium release. Acts as a potassium counter-ion channel that functions in synchronization with calcium release from intracellular stores. Activated by increased cytosolic Ca(2+) levels. The chain is Trimeric intracellular cation channel type B-A (tmem38b-a) from Xenopus laevis (African clawed frog).